The chain runs to 251 residues: Phosphate import ATP-binding protein PstB 2 (251 aa).

The region spanning 5 to 246 (ISAKDVHLSY…PKKQITSDYL (242 aa)) is the ABC transporter domain. 37 to 44 (GPSGCGKS) is an ATP binding site.

It belongs to the ABC transporter superfamily. Phosphate importer (TC 3.A.1.7) family. The complex is composed of two ATP-binding proteins (PstB), two transmembrane proteins (PstC and PstA) and a solute-binding protein (PstS).

The protein localises to the cell membrane. It catalyses the reaction phosphate(out) + ATP + H2O = ADP + 2 phosphate(in) + H(+). Part of the ABC transporter complex PstSACB involved in phosphate import. Responsible for energy coupling to the transport system. In Lactobacillus acidophilus (strain ATCC 700396 / NCK56 / N2 / NCFM), this protein is Phosphate import ATP-binding protein PstB 2.